The following is a 327-amino-acid chain: tRNA-dihydrouridine(20/20a) synthase (327 aa).

FMN is bound by residues 11-13 (PML) and Q63. C93 (proton donor) is an active-site residue. FMN-binding positions include K132, H165, 205 to 207 (NGG), and 227 to 228 (GR).

The protein belongs to the Dus family. DusA subfamily. The cofactor is FMN.

The catalysed reaction is 5,6-dihydrouridine(20) in tRNA + NADP(+) = uridine(20) in tRNA + NADPH + H(+). It carries out the reaction 5,6-dihydrouridine(20) in tRNA + NAD(+) = uridine(20) in tRNA + NADH + H(+). It catalyses the reaction 5,6-dihydrouridine(20a) in tRNA + NADP(+) = uridine(20a) in tRNA + NADPH + H(+). The enzyme catalyses 5,6-dihydrouridine(20a) in tRNA + NAD(+) = uridine(20a) in tRNA + NADH + H(+). Functionally, catalyzes the synthesis of 5,6-dihydrouridine (D), a modified base found in the D-loop of most tRNAs, via the reduction of the C5-C6 double bond in target uridines. Specifically modifies U20 and U20a in tRNAs. This Vibrio cholerae serotype O1 (strain ATCC 39315 / El Tor Inaba N16961) protein is tRNA-dihydrouridine(20/20a) synthase.